The primary structure comprises 552 residues: 5'-AMP-activated protein kinase catalytic subunit alpha-2 (552 aa).

One can recognise a Protein kinase domain in the interval 16 to 268; the sequence is YVLGDTLGVG…IKDIREHEWF (253 aa). ATP contacts are provided by residues 22–30 and lysine 45; that span reads LGVGTFGKV. Aspartate 139 (proton acceptor) is an active-site residue. At threonine 172 the chain carries Phosphothreonine; by LKB1 and CaMKK2. Threonine 258 bears the Phosphothreonine mark. The segment at 291–376 is AIS; that stretch reads EAVKEVCEKF…PERMPPLIAD (86 aa). Serine 377 carries the phosphoserine modification. Positions 477 to 521 are disordered; it reads VEQRSGSSTPQRSCSAAGLHRPRSSFDSTTAESHSLSGSLTGSLT. Residues 480-490 are compositionally biased toward polar residues; that stretch reads RSGSSTPQRSC. Position 491 is a phosphoserine (serine 491). Residues 501–510 are compositionally biased toward polar residues; sequence SFDSTTAESH. Over residues 511–521 the composition is skewed to low complexity; it reads SLSGSLTGSLT.

The protein belongs to the protein kinase superfamily. CAMK Ser/Thr protein kinase family. SNF1 subfamily. As to quaternary structure, AMPK is a heterotrimer of an alpha catalytic subunit (PRKAA1 or PRKAA2), a beta (PRKAB1 or PRKAB2) and a gamma non-catalytic subunits (PRKAG1, PRKAG2 or PRKAG3). Interacts with FNIP1 and FNIP2. Interacts with DUSP29. Interacts with ARF6. The phosphorylated form at Thr-172 mediated by CamKK2 interacts with ACSS2. Requires Mg(2+) as cofactor. Ubiquitinated. In terms of processing, phosphorylated at Thr-172 by STK11/LKB1 in complex with STE20-related adapter-alpha (STRADA) pseudo kinase and CAB39. Also phosphorylated at Thr-172 by CAMKK2; triggered by a rise in intracellular calcium ions, without detectable changes in the AMP/ATP ratio. CAMKK1 can also phosphorylate Thr-172, but at much lower level. Dephosphorylated by protein phosphatase 2A and 2C (PP2A and PP2C). Phosphorylated by ULK1; leading to negatively regulate AMPK activity and suggesting the existence of a regulatory feedback loop between ULK1 and AMPK. Dephosphorylated by PPM1A and PPM1B at Thr-172 (mediated by STK11/LKB1).

Its subcellular location is the cytoplasm. The protein resides in the nucleus. It carries out the reaction L-seryl-[protein] + ATP = O-phospho-L-seryl-[protein] + ADP + H(+). The catalysed reaction is L-threonyl-[protein] + ATP = O-phospho-L-threonyl-[protein] + ADP + H(+). It catalyses the reaction L-seryl-[acetyl-CoA carboxylase] + ATP = O-phospho-L-seryl-[acetyl-CoA carboxylase] + ADP + H(+). The enzyme catalyses L-seryl-[3-hydroxy-3-methylglutaryl-coenzyme A reductase] + ATP = O-phospho-L-seryl-[3-hydroxy-3-methylglutaryl-coenzyme A reductase] + ADP + H(+). Its activity is regulated as follows. Activated by phosphorylation on Thr-172. Binding of AMP to non-catalytic gamma subunit (PRKAG1, PRKAG2 or PRKAG3) results in allosteric activation, inducing phosphorylation on Thr-172. AMP-binding to gamma subunit also sustains activity by preventing dephosphorylation of Thr-172. ADP also stimulates Thr-172 phosphorylation, without stimulating already phosphorylated AMPK. ATP promotes dephosphorylation of Thr-172, rendering the enzyme inactive. Under physiological conditions AMPK mainly exists in its inactive form in complex with ATP, which is much more abundant than AMP. Selectively inhibited by compound C (6-[4-(2-Piperidin-1-yl-ethoxy)-phenyl)]-3-pyridin-4-yl-pyyrazolo[1,5-a] pyrimidine. Activated by resveratrol, a natural polyphenol present in red wine, and S17834, a synthetic polyphenol. Salicylate/aspirin directly activates kinase activity, primarily by inhibiting Thr-172 dephosphorylation. Its function is as follows. Catalytic subunit of AMP-activated protein kinase (AMPK), an energy sensor protein kinase that plays a key role in regulating cellular energy metabolism. In response to reduction of intracellular ATP levels, AMPK activates energy-producing pathways and inhibits energy-consuming processes: inhibits protein, carbohydrate and lipid biosynthesis, as well as cell growth and proliferation. AMPK acts via direct phosphorylation of metabolic enzymes, and by longer-term effects via phosphorylation of transcription regulators. Regulates lipid synthesis by phosphorylating and inactivating lipid metabolic enzymes such as ACACA, ACACB, GYS1, HMGCR and LIPE; regulates fatty acid and cholesterol synthesis by phosphorylating acetyl-CoA carboxylase (ACACA and ACACB) and hormone-sensitive lipase (LIPE) enzymes, respectively. Promotes lipolysis of lipid droplets by mediating phosphorylation of isoform 1 of CHKA (CHKalpha2). Regulates insulin-signaling and glycolysis by phosphorylating IRS1, PFKFB2 and PFKFB3. Involved in insulin receptor/INSR internalization. AMPK stimulates glucose uptake in muscle by increasing the translocation of the glucose transporter SLC2A4/GLUT4 to the plasma membrane, possibly by mediating phosphorylation of TBC1D4/AS160. Regulates transcription and chromatin structure by phosphorylating transcription regulators involved in energy metabolism such as CRTC2/TORC2, FOXO3, histone H2B, HDAC5, MEF2C, MLXIPL/ChREBP, EP300, HNF4A, p53/TP53, SREBF1, SREBF2 and PPARGC1A. Acts as a key regulator of glucose homeostasis in liver by phosphorylating CRTC2/TORC2, leading to CRTC2/TORC2 sequestration in the cytoplasm. In response to stress, phosphorylates 'Ser-36' of histone H2B (H2BS36ph), leading to promote transcription. Acts as a key regulator of cell growth and proliferation by phosphorylating FNIP1, TSC2, RPTOR, WDR24 and ATG1/ULK1: in response to nutrient limitation, negatively regulates the mTORC1 complex by phosphorylating RPTOR component of the mTORC1 complex and by phosphorylating and activating TSC2. Also phosphorylates and inhibits GATOR2 subunit WDR24 in response to nutrient limitation, leading to suppress glucose-mediated mTORC1 activation. In response to energetic stress, phosphorylates FNIP1, inactivating the non-canonical mTORC1 signaling, thereby promoting nuclear translocation of TFEB and TFE3, and inducing transcription of lysosomal or autophagy genes. In response to nutrient limitation, promotes autophagy by phosphorylating and activating ATG1/ULK1. In that process also activates WDR45/WIPI4. Phosphorylates CASP6, thereby preventing its autoprocessing and subsequent activation. AMPK also acts as a regulator of circadian rhythm by mediating phosphorylation of CRY1, leading to destabilize it. May regulate the Wnt signaling pathway by phosphorylating CTNNB1, leading to stabilize it. Also acts as a regulator of cellular polarity by remodeling the actin cytoskeleton; probably by indirectly activating myosin. Also phosphorylates CFTR, EEF2K, KLC1, NOS3 and SLC12A1. Plays an important role in the differential regulation of pro-autophagy (composed of PIK3C3, BECN1, PIK3R4 and UVRAG or ATG14) and non-autophagy (composed of PIK3C3, BECN1 and PIK3R4) complexes, in response to glucose starvation. Can inhibit the non-autophagy complex by phosphorylating PIK3C3 and can activate the pro-autophagy complex by phosphorylating BECN1. Upon glucose starvation, promotes ARF6 activation in a kinase-independent manner leading to cell migration. Upon glucose deprivation mediates the phosphorylation of ACSS2 at 'Ser-659', which exposes the nuclear localization signal of ACSS2, required for its interaction with KPNA1 and nuclear translocation. Upon stress, regulates mitochondrial fragmentation through phosphorylation of MTFR1L. The chain is 5'-AMP-activated protein kinase catalytic subunit alpha-2 (PRKAA2) from Pongo abelii (Sumatran orangutan).